The sequence spans 142 residues: Hemoglobin subunit alpha (142 aa).

The residue at position 1 (S1) is an N-acetylserine. Residues 1–142 (SLSDKDKAAV…VALALAERYR (142 aa)) enclose the Globin domain. H59 serves as a coordination point for O2. H88 serves as a coordination point for heme b.

The protein belongs to the globin family. In terms of assembly, heterotetramer of two alpha chains and two beta chains. In terms of tissue distribution, red blood cells.

Its function is as follows. Involved in oxygen transport from gills to the various peripheral tissues. This Gymnodraco acuticeps (Antarctic dragonfish) protein is Hemoglobin subunit alpha (hba).